The sequence spans 110 residues: Early nodulin-12A (110 aa).

The signal sequence occupies residues 1 to 24 (MASFFLSSLVLFLAALILVPQGLA). Residues 31–110 (VYEPPVNGPP…HPTEEHNIHF (80 aa)) are disordered. The span at 32-43 (YEPPVNGPPVNK) shows a compositional bias: pro residues. Repeat copies occupy residues 34 to 38 (PPVNG), 39 to 43 (PPVNK), and 44 to 48 (PPQKE). The tract at residues 34-88 (PPVNGPPVNKPPQKETPVHKPPQKETPVHKPPQKEPPRHKPPQKEPPRHKPPHKK) is 11 X 5 AA approximate tandem repeats of P-P-[VQRH]-[NKH]-[GKE]. Over residues 45 to 81 (PQKETPVHKPPQKETPVHKPPQKEPPRHKPPQKEPPR) the composition is skewed to basic and acidic residues. A 4; approximate repeat occupies 49-53 (TPVHK). Repeat unit 5 spans residues 54 to 58 (PPQKE). The 6; approximate repeat unit spans residues 59 to 63 (TPVHK). Tandem repeats lie at residues 64 to 68 (PPQKE), 69 to 73 (PPRHK), 74 to 78 (PPQKE), 79 to 83 (PPRHK), and 84 to 88 (PPHKK). A compositionally biased stretch (basic residues) spans 82 to 93 (HKPPHKKSHLHV). Basic and acidic residues predominate over residues 101-110 (HPTEEHNIHF).

The protein belongs to the plant proline-rich protein superfamily. ENOD12 family. Root nodules, stem and flower.

It localises to the secreted. The protein localises to the cell wall. Functionally, involved in the infection process during the plant-rhizobium interaction. This Pisum sativum (Garden pea) protein is Early nodulin-12A (ENOD12A).